A 98-amino-acid chain; its full sequence is DNA-binding protein Fis (98 aa).

A DNA-binding region (H-T-H motif) is located at residues 74-93 (QTRAALMLGINRSTLRKKLK).

This sequence belongs to the transcriptional regulatory Fis family. As to quaternary structure, homodimer.

Activates ribosomal RNA transcription. Plays a direct role in upstream activation of rRNA promoters. The sequence is that of DNA-binding protein Fis from Buchnera aphidicola subsp. Acyrthosiphon pisum (strain 5A).